Consider the following 72-residue polypeptide: Mu-like prophage FluMu protein C (72 aa).

A DNA-binding region (H-T-H motif) is located at residues 35–55; it reads NVPDLIKKYRLSESTIYAILR.

Belongs to the c/mor transcriptional regulatory family.

Functionally, required for transcription of the phage late genes. This is Mu-like prophage FluMu protein C from Haemophilus influenzae (strain ATCC 51907 / DSM 11121 / KW20 / Rd).